A 492-amino-acid chain; its full sequence is Glutamyl-tRNA(Gln) amidotransferase subunit A (492 aa).

Active-site charge relay system residues include Lys-79 and Ser-154. The active-site Acyl-ester intermediate is the Ser-178.

Belongs to the amidase family. GatA subfamily. Heterotrimer of A, B and C subunits.

It carries out the reaction L-glutamyl-tRNA(Gln) + L-glutamine + ATP + H2O = L-glutaminyl-tRNA(Gln) + L-glutamate + ADP + phosphate + H(+). Its function is as follows. Allows the formation of correctly charged Gln-tRNA(Gln) through the transamidation of misacylated Glu-tRNA(Gln) in organisms which lack glutaminyl-tRNA synthetase. The reaction takes place in the presence of glutamine and ATP through an activated gamma-phospho-Glu-tRNA(Gln). This Acinetobacter baylyi (strain ATCC 33305 / BD413 / ADP1) protein is Glutamyl-tRNA(Gln) amidotransferase subunit A.